The primary structure comprises 480 residues: Ribulose bisphosphate carboxylase large chain (480 aa).

Residues 1 to 2 constitute a propeptide that is removed on maturation; it reads MS. Pro3 carries the N-acetylproline modification. Lys14 bears the N6,N6,N6-trimethyllysine mark. Residues Asn123 and Thr173 each coordinate substrate. Lys175 functions as the Proton acceptor in the catalytic mechanism. Lys177 provides a ligand contact to substrate. Residues Lys201, Asp203, and Glu204 each coordinate Mg(2+). N6-carboxylysine is present on Lys201. His294 (proton acceptor) is an active-site residue. Residues Arg295, His327, and Ser379 each coordinate substrate.

It belongs to the RuBisCO large chain family. Type I subfamily. As to quaternary structure, heterohexadecamer of 8 large chains and 8 small chains; disulfide-linked. The disulfide link is formed within the large subunit homodimers. It depends on Mg(2+) as a cofactor. In terms of processing, the disulfide bond which can form in the large chain dimeric partners within the hexadecamer appears to be associated with oxidative stress and protein turnover.

The protein resides in the plastid. It localises to the chloroplast. The enzyme catalyses 2 (2R)-3-phosphoglycerate + 2 H(+) = D-ribulose 1,5-bisphosphate + CO2 + H2O. It catalyses the reaction D-ribulose 1,5-bisphosphate + O2 = 2-phosphoglycolate + (2R)-3-phosphoglycerate + 2 H(+). In terms of biological role, ruBisCO catalyzes two reactions: the carboxylation of D-ribulose 1,5-bisphosphate, the primary event in carbon dioxide fixation, as well as the oxidative fragmentation of the pentose substrate in the photorespiration process. Both reactions occur simultaneously and in competition at the same active site. The polypeptide is Ribulose bisphosphate carboxylase large chain (Alluaudia procera (Madagascan ocotillo)).